Consider the following 158-residue polypeptide: Transcriptional repressor NrdR (158 aa).

Residues 3–34 (CPYCGYPDSKVIDSRPTDDNTSIRRRRECLKC) fold into a zinc finger. Residues 49–139 (ILVIKKDNRR…VYRQFKDINT (91 aa)) enclose the ATP-cone domain.

The protein belongs to the NrdR family. It depends on Zn(2+) as a cofactor.

In terms of biological role, negatively regulates transcription of bacterial ribonucleotide reductase nrd genes and operons by binding to NrdR-boxes. In Thermoanaerobacter pseudethanolicus (strain ATCC 33223 / 39E) (Clostridium thermohydrosulfuricum), this protein is Transcriptional repressor NrdR.